A 403-amino-acid polypeptide reads, in one-letter code: uncharacterized protein (403 aa).

An N-terminal signal peptide occupies residues 1–26; that stretch reads MYKFKTNLFLVIYFIAIFSIESSISS. Over 27–381 the chain is Extracellular; the sequence is FNTEINSNSN…DSDNSSFGIS (355 aa). Residues Asn58, Asn90, Asn93, Asn124, Asn137, Asn371, and Asn375 are each glycosylated (N-linked (GlcNAc...) asparagine). Residues 382-402 traverse the membrane as a helical segment; the sequence is IQKYLNSFLNSFIIILIINII. Position 403 (Ile403) is a topological domain, cytoplasmic.

The protein localises to the membrane. This is an uncharacterized protein from Dictyostelium discoideum (Social amoeba).